The sequence spans 224 residues: MDLKNKSAVILLSGGLDSSTVTGLAKASKAKIFGLSFDYGQRHKKELDSAFTIANHFEIEEFKIVKLDLSLWGGSSLTDIKKDLPIDGIQQNTIPNTYVPGRNTIFISVALSYAEAINADLIGLGVNALDYSGYPDCRPDYIKKFQELANLANKRGREENPIKLWTPLLDLNKEDIIQLAFDNNVPLEKTWSCYSGNLEPCGKCDSCRIRQTAYKKWQIKKNEN.

12-22 (LSGGLDSSTVT) serves as a coordination point for ATP. The Zn(2+) site is built by C193, C201, C204, and C207.

This sequence belongs to the QueC family. Zn(2+) is required as a cofactor.

The enzyme catalyses 7-carboxy-7-deazaguanine + NH4(+) + ATP = 7-cyano-7-deazaguanine + ADP + phosphate + H2O + H(+). Its pathway is purine metabolism; 7-cyano-7-deazaguanine biosynthesis. Catalyzes the ATP-dependent conversion of 7-carboxy-7-deazaguanine (CDG) to 7-cyano-7-deazaguanine (preQ(0)). In Prochlorococcus marinus subsp. pastoris (strain CCMP1986 / NIES-2087 / MED4), this protein is 7-cyano-7-deazaguanine synthase.